Reading from the N-terminus, the 86-residue chain is Small ribosomal subunit protein uS15c (86 aa).

It belongs to the universal ribosomal protein uS15 family. In terms of assembly, part of the 30S ribosomal subunit.

Its subcellular location is the plastid. The sequence is that of Small ribosomal subunit protein uS15c (rps15) from Cuscuta obtusiflora (Peruvian dodder).